The sequence spans 534 residues: Peptide chain release factor 3 (534 aa).

A tr-type G domain is found at 9–278 (ARRRTFAIIS…FFVEHAPSPQ (270 aa)). GTP is bound by residues 18-25 (SHPDAGKT), 86-90 (DTPGH), and 140-143 (NKLD).

It belongs to the TRAFAC class translation factor GTPase superfamily. Classic translation factor GTPase family. PrfC subfamily.

The protein resides in the cytoplasm. Its function is as follows. Increases the formation of ribosomal termination complexes and stimulates activities of RF-1 and RF-2. It binds guanine nucleotides and has strong preference for UGA stop codons. It may interact directly with the ribosome. The stimulation of RF-1 and RF-2 is significantly reduced by GTP and GDP, but not by GMP. The protein is Peptide chain release factor 3 of Xylella fastidiosa (strain M23).